Consider the following 805-residue polypeptide: Kinesin-like protein KIP3 (805 aa).

A Kinesin motor domain is found at 10 to 438 (SIVVAIRVRP…LKYANRAKEI (429 aa)). An ATP-binding site is contributed by 192 to 199 (GATGCGKT). Positions 449–481 (LSRHVGSYLKMITEQKRQIEELREREEKMISLK) form a coiled coil. The tract at residues 720 to 805 (NFSQKKVKWT…HQSLLATARK (86 aa)) is disordered. The span at 764 to 773 (MQDTTFNEQG) shows a compositional bias: polar residues. The span at 774 to 783 (PSTPSAPTTA) shows a compositional bias: low complexity. Positions 792–805 (SLLTHQSLLATARK) are enriched in polar residues.

This sequence belongs to the TRAFAC class myosin-kinesin ATPase superfamily. Kinesin family. Kinesin II subfamily.

It is found in the cytoplasm. The protein resides in the cytoskeleton. The sequence is that of Kinesin-like protein KIP3 (KIP3) from Saccharomyces cerevisiae (strain ATCC 204508 / S288c) (Baker's yeast).